A 139-amino-acid polypeptide reads, in one-letter code: Aspartate 1-decarboxylase (139 aa).

The Schiff-base intermediate with substrate; via pyruvic acid role is filled by Ser-25. Position 25 is a pyruvic acid (Ser) (Ser-25). Position 57 (Thr-57) interacts with substrate. Catalysis depends on Tyr-58, which acts as the Proton donor. 73-75 is a binding site for substrate; it reads GAA. Positions 117–139 are disordered; sequence LGADPAEPVPGSDQARSPQAVTA. The segment covering 130–139 has biased composition (polar residues); that stretch reads QARSPQAVTA.

This sequence belongs to the PanD family. As to quaternary structure, heterooctamer of four alpha and four beta subunits. Pyruvate serves as cofactor. Post-translationally, is synthesized initially as an inactive proenzyme, which is activated by self-cleavage at a specific serine bond to produce a beta-subunit with a hydroxyl group at its C-terminus and an alpha-subunit with a pyruvoyl group at its N-terminus.

It localises to the cytoplasm. The enzyme catalyses L-aspartate + H(+) = beta-alanine + CO2. It participates in cofactor biosynthesis; (R)-pantothenate biosynthesis; beta-alanine from L-aspartate: step 1/1. Functionally, catalyzes the pyruvoyl-dependent decarboxylation of aspartate to produce beta-alanine. The polypeptide is Aspartate 1-decarboxylase (Streptomyces avermitilis (strain ATCC 31267 / DSM 46492 / JCM 5070 / NBRC 14893 / NCIMB 12804 / NRRL 8165 / MA-4680)).